A 71-amino-acid polypeptide reads, in one-letter code: Translation initiation factor IF-1 (71 aa).

The region spanning 1-71 (MAKDAIKLRA…TKGRITYRHK (71 aa)) is the S1-like domain.

It belongs to the IF-1 family. As to quaternary structure, component of the 30S ribosomal translation pre-initiation complex which assembles on the 30S ribosome in the order IF-2 and IF-3, IF-1 and N-formylmethionyl-tRNA(fMet); mRNA recruitment can occur at any time during PIC assembly.

It localises to the cytoplasm. Its function is as follows. One of the essential components for the initiation of protein synthesis. Stabilizes the binding of IF-2 and IF-3 on the 30S subunit to which N-formylmethionyl-tRNA(fMet) subsequently binds. Helps modulate mRNA selection, yielding the 30S pre-initiation complex (PIC). Upon addition of the 50S ribosomal subunit IF-1, IF-2 and IF-3 are released leaving the mature 70S translation initiation complex. This chain is Translation initiation factor IF-1, found in Mycoplasmopsis synoviae (strain 53) (Mycoplasma synoviae).